We begin with the raw amino-acid sequence, 162 residues long: Large ribosomal subunit protein uL11 (162 aa).

Residues 1-27 (MAGTIEVLVPGGEANPGPPLGPELGPT) form a disordered region.

The protein belongs to the universal ribosomal protein uL11 family. Part of the 50S ribosomal subunit. Forms part of the ribosomal stalk which helps the ribosome interact with GTP-bound translation factors. Forms a heptameric L10(L12)2(L12)2(L12)2 complex, where L10 forms an elongated spine to which 3 L12 dimers bind in a sequential fashion.

Its function is as follows. Forms part of the ribosomal stalk which helps the ribosome interact with GTP-bound translation factors. The polypeptide is Large ribosomal subunit protein uL11 (Haloarcula marismortui (strain ATCC 43049 / DSM 3752 / JCM 8966 / VKM B-1809) (Halobacterium marismortui)).